The primary structure comprises 194 residues: Large ribosomal subunit protein bL9 (194 aa).

The tract at residues glutamine 148 to alanine 194 is disordered.

The protein belongs to the bacterial ribosomal protein bL9 family.

In terms of biological role, binds to the 23S rRNA. The chain is Large ribosomal subunit protein bL9 from Caulobacter vibrioides (strain ATCC 19089 / CIP 103742 / CB 15) (Caulobacter crescentus).